A 98-amino-acid chain; its full sequence is NADH-ubiquinone oxidoreductase chain 4L (98 aa).

The next 3 helical transmembrane spans lie at 1–21, 29–49, and 59–79; these read MTPV…GLAF, ALLC…LWAL, and APML…ALLV.

Belongs to the complex I subunit 4L family.

It is found in the mitochondrion membrane. It carries out the reaction a ubiquinone + NADH + 5 H(+)(in) = a ubiquinol + NAD(+) + 4 H(+)(out). In terms of biological role, core subunit of the mitochondrial membrane respiratory chain NADH dehydrogenase (Complex I) which catalyzes electron transfer from NADH through the respiratory chain, using ubiquinone as an electron acceptor. Part of the enzyme membrane arm which is embedded in the lipid bilayer and involved in proton translocation. The protein is NADH-ubiquinone oxidoreductase chain 4L (MT-ND4L) of Carassius auratus (Goldfish).